A 364-amino-acid chain; its full sequence is Nicotinate-nucleotide--dimethylbenzimidazole phosphoribosyltransferase (364 aa).

Glutamate 332 functions as the Proton acceptor in the catalytic mechanism.

This sequence belongs to the CobT family.

The catalysed reaction is 5,6-dimethylbenzimidazole + nicotinate beta-D-ribonucleotide = alpha-ribazole 5'-phosphate + nicotinate + H(+). Its pathway is nucleoside biosynthesis; alpha-ribazole biosynthesis; alpha-ribazole from 5,6-dimethylbenzimidazole: step 1/2. Its function is as follows. Catalyzes the synthesis of alpha-ribazole-5'-phosphate from nicotinate mononucleotide (NAMN) and 5,6-dimethylbenzimidazole (DMB). The polypeptide is Nicotinate-nucleotide--dimethylbenzimidazole phosphoribosyltransferase (Salinispora tropica (strain ATCC BAA-916 / DSM 44818 / JCM 13857 / NBRC 105044 / CNB-440)).